The chain runs to 569 residues: 2-isopropylmalate synthase (569 aa).

A Pyruvate carboxyltransferase domain is found at 31-305 (PRWMSTDLRD…APELDFSDID (275 aa)). The Mg(2+) site is built by D40, H244, H246, and N280. Residues 437–569 (RETPLRYVSH…TASASAATEA (133 aa)) form a regulatory domain region.

Belongs to the alpha-IPM synthase/homocitrate synthase family. LeuA type 2 subfamily. In terms of assembly, homodimer. The cofactor is Mg(2+).

It localises to the cytoplasm. It catalyses the reaction 3-methyl-2-oxobutanoate + acetyl-CoA + H2O = (2S)-2-isopropylmalate + CoA + H(+). The protein operates within amino-acid biosynthesis; L-leucine biosynthesis; L-leucine from 3-methyl-2-oxobutanoate: step 1/4. In terms of biological role, catalyzes the condensation of the acetyl group of acetyl-CoA with 3-methyl-2-oxobutanoate (2-ketoisovalerate) to form 3-carboxy-3-hydroxy-4-methylpentanoate (2-isopropylmalate). This Cupriavidus taiwanensis (strain DSM 17343 / BCRC 17206 / CCUG 44338 / CIP 107171 / LMG 19424 / R1) (Ralstonia taiwanensis (strain LMG 19424)) protein is 2-isopropylmalate synthase.